Reading from the N-terminus, the 206-residue chain is SOSS complex subunit B2 (206 aa).

The segment at residues 26 to 89 is a DNA-binding region (OB); it reads IVLEIGRVTK…SMWKGCLTLY (64 aa). Disordered stretches follow at residues 114–146 and 166–206; these read EPNP…GTGT and SYAG…AFKR. Residues 181-196 are compositionally biased toward polar residues; the sequence is LPGTANNQTVMTTISN.

It belongs to the SOSS-B family. SOSS-B2 subfamily. In terms of assembly, component of the SOSS complex, composed of SOSS-B (SOSS-B1/NABP2 or SOSS-B2/NABP1), SOSS-A/INTS3 and SOSS-C/INIP. SOSS complexes containing SOSS-B1/NABP2 are more abundant than complexes containing SOSS-B2/NABP1.

The protein localises to the nucleus. Its function is as follows. Component of the SOSS complex, a multiprotein complex that functions downstream of the MRN complex to promote DNA repair and G2/M checkpoint. In the SOSS complex, acts as a sensor of single-stranded DNA that binds to single-stranded DNA, in particular to polypyrimidines. The SOSS complex associates with DNA lesions and influences diverse endpoints in the cellular DNA damage response including cell-cycle checkpoint activation, recombinational repair and maintenance of genomic stability. Required for efficient homologous recombination-dependent repair of double-strand breaks (DSBs) and ATM-dependent signaling pathways. This Bos taurus (Bovine) protein is SOSS complex subunit B2 (NABP1).